Here is a 355-residue protein sequence, read N- to C-terminus: MKKHNFYAGPSILSEYTIKNTAAAVENFAGMGLSLLEISHRSKEFVAVNDEARALIKELLDVPAGYEVVFMGGGASMQFCMVPYNLLNKKASYLDTGTWASNAIKEAKLFGEVDVVASSKDKNYTYIPKGYAIADDSDYFHFTSNNTIYGTEMRKDPDVKQRLVCDMSSDIFSRPIDISKYDIIYAGAQKNLAPAGVTLAIVRVDALGHVDRPIPTMLNYATHIKKDSMFNTPPVLPIYAALQTLKWYKEQGGIAAMEKKDLENAAILYDEIDRNKLFRGTVAEEDRSIMNVCFVMNDEYKELEDEFSKYATAAGMVGIKGHRSVGGFRASLYNAMPKSSVEALVACMKEFEKQH.

L-glutamate is bound at residue R41. Residues 75–76 (AS), W99, T147, D166, and Q189 each bind pyridoxal 5'-phosphate. Residue K190 is modified to N6-(pyridoxal phosphate)lysine. Residue 231 to 232 (NT) participates in pyridoxal 5'-phosphate binding.

It belongs to the class-V pyridoxal-phosphate-dependent aminotransferase family. SerC subfamily. Homodimer. Pyridoxal 5'-phosphate serves as cofactor.

It is found in the cytoplasm. It catalyses the reaction O-phospho-L-serine + 2-oxoglutarate = 3-phosphooxypyruvate + L-glutamate. The catalysed reaction is 4-(phosphooxy)-L-threonine + 2-oxoglutarate = (R)-3-hydroxy-2-oxo-4-phosphooxybutanoate + L-glutamate. Its pathway is amino-acid biosynthesis; L-serine biosynthesis; L-serine from 3-phospho-D-glycerate: step 2/3. The protein operates within cofactor biosynthesis; pyridoxine 5'-phosphate biosynthesis; pyridoxine 5'-phosphate from D-erythrose 4-phosphate: step 3/5. Its function is as follows. Catalyzes the reversible conversion of 3-phosphohydroxypyruvate to phosphoserine and of 3-hydroxy-2-oxo-4-phosphonooxybutanoate to phosphohydroxythreonine. This is Phosphoserine aminotransferase from Parabacteroides distasonis (strain ATCC 8503 / DSM 20701 / CIP 104284 / JCM 5825 / NCTC 11152).